A 239-amino-acid polypeptide reads, in one-letter code: Uridylate kinase (239 aa).

10 to 13 lines the ATP pocket; sequence KISG. The interval 18–23 is involved in allosteric activation by GTP; sequence GEAGFG. Position 52 (G52) interacts with UMP. Residues G53 and R57 each contribute to the ATP site. UMP-binding positions include D72 and 133–140; that span reads TGNPYFST. ATP contacts are provided by N161, Y167, and D170.

Belongs to the UMP kinase family. In terms of assembly, homohexamer.

It is found in the cytoplasm. The catalysed reaction is UMP + ATP = UDP + ADP. It participates in pyrimidine metabolism; CTP biosynthesis via de novo pathway; UDP from UMP (UMPK route): step 1/1. Allosterically activated by GTP. Inhibited by UTP. Its function is as follows. Catalyzes the reversible phosphorylation of UMP to UDP. The chain is Uridylate kinase from Lacticaseibacillus paracasei (strain ATCC 334 / BCRC 17002 / CCUG 31169 / CIP 107868 / KCTC 3260 / NRRL B-441) (Lactobacillus paracasei).